The following is a 352-amino-acid chain: Coproporphyrin III ferrochelatase (352 aa).

Positions 52 and 121 each coordinate Fe-coproporphyrin III. Fe(2+) is bound by residues His-178 and Glu-267.

The protein belongs to the ferrochelatase family.

Its subcellular location is the cytoplasm. The enzyme catalyses Fe-coproporphyrin III + 2 H(+) = coproporphyrin III + Fe(2+). Its pathway is porphyrin-containing compound metabolism; protoheme biosynthesis. Involved in coproporphyrin-dependent heme b biosynthesis. Catalyzes the insertion of ferrous iron into coproporphyrin III to form Fe-coproporphyrin III. The sequence is that of Coproporphyrin III ferrochelatase from Propionibacterium freudenreichii subsp. freudenreichii.